The primary structure comprises 876 residues: MDFERYNARETEPKWRDKWERSATFKTDNDDPRPKYYVLEMFPYPSGRIHMGHVRNYTMGDVIARYKRARGFSVLHPMGWDAFGMPAENAAMQNKSHPAAWTYANIEAMRAQLKSMGLSLDWSREIATCDPAYYRHQQKMFLDFLAAGLVDRKKSKVNWDPVDHTVLANEQVIDGRGWRSGALVEQRELTQWFFKITDYAEDLLRSLDGLTRWPEKVRLMQANWIGRSEGLLVRFALEPTLSAPATEIEVYTTRPDTLFGAKFLAIAADHPIAADCAKADPALAAFIAECRLRGTSVAAIETAEKKGVDTGLRVRHPFDENWLLPVYVANFVLMDYGTGAIFGCPAHDQRDLDFANAYGLGATPVILPPDADPKTFVIADKAYDGDGLLFHSRFLDGMTVEAAQEEVARRLEEHPLGNRPQAKRQVNFRLRDWGISRQRYWGCPIPIIHCPEHGAVPVPAKDLPVELPPDVSFDEPGNPLDRHPTWKHVNCPICAAPSLRETDTMDTFVDSSWYFARFTQPWMEDAPTDPSAIAKWLPVDQYIGGVEHAILHLLYARFFTRAMQATGHAGEIREPFAGLFTQGMVVHETYRSEAGDWMFPADVRIEIGPAGRRAFDLASGAEVSIGGIEKMSKSKRNTVDPDEIIGTFGADTARWFVLSDSPPERDVIWTEEGVQGAAKFVQRLWRLIGELIFLSGADGAPKPQSISPQAAAIRRAAHQSLIRLEEDLDRLRFNRAVAQAHDLANKLGAAVGDIDSVEIAPDLRFAFREAAEILTLMIAPMMPHLAEECWARLGHKGLAAEAPWPQADHSLVVEETIDLPVQVNGKKRGDLIIDRAAGREAIEAAALALEPVKRALEGRPVKKIIIVPQRIVNVVA.

The short motif at 43 to 53 is the 'HIGH' region element; sequence PYPSGRIHMGH. The 'KMSKS' region signature appears at 630–634; it reads KMSKS. An ATP-binding site is contributed by Lys-633.

It belongs to the class-I aminoacyl-tRNA synthetase family.

Its subcellular location is the cytoplasm. The catalysed reaction is tRNA(Leu) + L-leucine + ATP = L-leucyl-tRNA(Leu) + AMP + diphosphate. The sequence is that of Leucine--tRNA ligase from Methylocella silvestris (strain DSM 15510 / CIP 108128 / LMG 27833 / NCIMB 13906 / BL2).